A 671-amino-acid chain; its full sequence is UvrABC system protein C (671 aa).

Positions 16 to 95 (VEPGVYRFRD…IKEFDPRFNV (80 aa)) constitute a GIY-YIG domain. The region spanning 208-243 (DRLARDMEREMNQAAQELNFERAARLRDNISALQRA) is the UVR domain. The disordered stretch occupies residues 645 to 671 (SSAPSSGATEAVLPAMVENGVDDTPST).

Belongs to the UvrC family. Interacts with UvrB in an incision complex.

The protein localises to the cytoplasm. In terms of biological role, the UvrABC repair system catalyzes the recognition and processing of DNA lesions. UvrC both incises the 5' and 3' sides of the lesion. The N-terminal half is responsible for the 3' incision and the C-terminal half is responsible for the 5' incision. This is UvrABC system protein C from Mycobacteroides abscessus (strain ATCC 19977 / DSM 44196 / CCUG 20993 / CIP 104536 / JCM 13569 / NCTC 13031 / TMC 1543 / L948) (Mycobacterium abscessus).